A 236-amino-acid chain; its full sequence is Zinc finger AN1 domain-containing stress-associated protein 13 (236 aa).

2 disordered regions span residues 48-81 (KEGR…PGKR) and 150-173 (TVPE…AKTK). A compositionally biased stretch (polar residues) spans 66–75 (RLQLPTTSIV). The segment at 170–216 (AKTKSRCAACGRRVGLMGFECRCGAVFCGAHPLLGQARLWLRLQGRA) adopts an AN1-type; degenerate zinc-finger fold. Zn(2+)-binding residues include Cys-176, Cys-179, Cys-197, and His-200.

In terms of biological role, may be involved in environmental stress response. This Oryza sativa subsp. japonica (Rice) protein is Zinc finger AN1 domain-containing stress-associated protein 13 (SAP13).